We begin with the raw amino-acid sequence, 343 residues long: Thromboxane A2 receptor (343 aa).

Over 1–29 (MWPNGSSLGPCFRPTNITLEERRLIASPW) the chain is Extracellular. N-linked (GlcNAc...) asparagine glycans are attached at residues asparagine 4 and asparagine 16. A helical membrane pass occupies residues 30 to 52 (FAASFCVVGLASNLLALSVLAGA). The Cytoplasmic segment spans residues 53–66 (RQGGSHTRSSFLTF). The chain crosses the membrane as a helical span at residues 67 to 87 (LCGLVLTDFLGLLVTGAIVVS). At 88 to 106 (QHAALFEWHAVDPGCRLCR) the chain is on the extracellular side. Cysteines 105 and 183 form a disulfide. The chain crosses the membrane as a helical span at residues 107-128 (FMGVVMIFFGLSPLLLGATMAS). Residues 129-149 (ERFLGITRPFSRPVVTSQRRA) lie on the Cytoplasmic side of the membrane. The helical transmembrane segment at 150–172 (WATVGLVWAAALALGLLPLLGLG) threads the bilayer. At 173 to 193 (RYTVQYPGSWCFLTLGAESGD) the chain is on the extracellular side. A helical transmembrane segment spans residues 194–219 (VAFGLLFSMLGGLSVGLSFLLNTVSV). At 220 to 246 (ATLCHVYHGQEAAQQRPRDSEVEMMAQ) the chain is on the cytoplasmic side. Residues 247–270 (LLGIMLVASVCWLPLLVFIAQTVL) traverse the membrane as a helical segment. Residues 271–289 (RNPPAMSPSGQLSRATEQE) lie on the Extracellular side of the membrane. A helical membrane pass occupies residues 290–311 (LLIYLRVATWNQILDPWVYILF). Topologically, residues 312–343 (RRAVLRRLQPRLSTRPRSLSLQPQLTQRSGLQ) are cytoplasmic. Phosphoserine occurs at positions 329 and 331.

This sequence belongs to the G-protein coupled receptor 1 family. As to quaternary structure, interacts with RPGRIP1L. Interacts with RACK1; the interaction regulates TBXA2R cell surface expression.

The protein resides in the cell membrane. Receptor for thromboxane A2 (TXA2), a potent stimulator of platelet aggregation. The activity of this receptor is mediated by a G-protein that activates a phosphatidylinositol-calcium second messenger system. In the kidney, the binding of TXA2 to glomerular TP receptors causes intense vasoconstriction. Activates phospholipase C and adenylyl cyclase. The chain is Thromboxane A2 receptor (TBXA2R) from Chlorocebus aethiops (Green monkey).